A 1384-amino-acid polypeptide reads, in one-letter code: DNA-directed RNA polymerase subunit beta (1384 aa).

It belongs to the RNA polymerase beta chain family. The RNAP catalytic core consists of 2 alpha, 1 beta, 1 beta' and 1 omega subunit. When a sigma factor is associated with the core the holoenzyme is formed, which can initiate transcription.

The enzyme catalyses RNA(n) + a ribonucleoside 5'-triphosphate = RNA(n+1) + diphosphate. Its function is as follows. DNA-dependent RNA polymerase catalyzes the transcription of DNA into RNA using the four ribonucleoside triphosphates as substrates. The chain is DNA-directed RNA polymerase subunit beta from Xylella fastidiosa (strain M12).